The primary structure comprises 288 residues: MEKVIDITERVPAMKKRRRRRTNFKFLALVTIFLFIIIILLYFQLPYSDIKKIDIKGAALKEDTYYIDQSNLKINDSLWGFKISEVEQAIAQHEWVKSVTVERKFLNEVQITVEEWQKVAYISQDGEFYPMLDNGIVFEESNEIVPIDAPIFRDFENEALRKKLLKELANLKPEVLSLISQINANPTEADPYSITLFMNDGYEVRADANTLAEKLNYYPSIIAQIESEDVSEKGIVDIEVGSYYRPFSDEYTLIKENTEKTEEPAEETENADTEEGGQLEEQNEEEPE.

Residues 1-25 (MEKVIDITERVPAMKKRRRRRTNFK) lie on the Cytoplasmic side of the membrane. The helical transmembrane segment at 26–46 (FLALVTIFLFIIIILLYFQLP) threads the bilayer. Over 47 to 288 (YSDIKKIDIK…LEEQNEEEPE (242 aa)) the chain is Extracellular. One can recognise a POTRA domain in the interval 48-116 (SDIKKIDIKG…NEVQITVEEW (69 aa)). Residues 253 to 263 (LIKENTEKTEE) are compositionally biased toward basic and acidic residues. The interval 253 to 288 (LIKENTEKTEEPAEETENADTEEGGQLEEQNEEEPE) is disordered. Over residues 264–288 (PAEETENADTEEGGQLEEQNEEEPE) the composition is skewed to acidic residues.

This sequence belongs to the FtsQ/DivIB family. DivIB subfamily.

It is found in the cell membrane. In terms of biological role, cell division protein that may be involved in stabilizing or promoting the assembly of the division complex. This Solibacillus silvestris (strain StLB046) (Bacillus silvestris) protein is Cell division protein DivIB.